We begin with the raw amino-acid sequence, 225 residues long: Cytochrome c oxidase subunit 2 (225 aa).

Over 1 to 26 (MMTWSQMSFSDMNSPIMEQMVFFHDH) the chain is Mitochondrial intermembrane. Residues 27–48 (SMMIILMITILTIYMITNIMMN) traverse the membrane as a helical segment. Over 49 to 62 (NLLSRSMMEGQEIE) the chain is Mitochondrial matrix. The helical transmembrane segment at 63–82 (IIWTIIPAITLIFIAIPSLH) threads the bilayer. Over 83–225 (LLYLTDETFN…KNFINFINSS (143 aa)) the chain is Mitochondrial intermembrane. Residues H160, C195, E197, C199, H203, and M206 each contribute to the Cu cation site. E197 is a Mg(2+) binding site.

It belongs to the cytochrome c oxidase subunit 2 family. As to quaternary structure, component of the cytochrome c oxidase (complex IV, CIV), a multisubunit enzyme composed of a catalytic core of 3 subunits and several supernumerary subunits. The complex exists as a monomer or a dimer and forms supercomplexes (SCs) in the inner mitochondrial membrane with ubiquinol-cytochrome c oxidoreductase (cytochrome b-c1 complex, complex III, CIII). Cu cation serves as cofactor.

The protein resides in the mitochondrion inner membrane. The enzyme catalyses 4 Fe(II)-[cytochrome c] + O2 + 8 H(+)(in) = 4 Fe(III)-[cytochrome c] + 2 H2O + 4 H(+)(out). Its function is as follows. Component of the cytochrome c oxidase, the last enzyme in the mitochondrial electron transport chain which drives oxidative phosphorylation. The respiratory chain contains 3 multisubunit complexes succinate dehydrogenase (complex II, CII), ubiquinol-cytochrome c oxidoreductase (cytochrome b-c1 complex, complex III, CIII) and cytochrome c oxidase (complex IV, CIV), that cooperate to transfer electrons derived from NADH and succinate to molecular oxygen, creating an electrochemical gradient over the inner membrane that drives transmembrane transport and the ATP synthase. Cytochrome c oxidase is the component of the respiratory chain that catalyzes the reduction of oxygen to water. Electrons originating from reduced cytochrome c in the intermembrane space (IMS) are transferred via the dinuclear copper A center (CU(A)) of subunit 2 and heme A of subunit 1 to the active site in subunit 1, a binuclear center (BNC) formed by heme A3 and copper B (CU(B)). The BNC reduces molecular oxygen to 2 water molecules using 4 electrons from cytochrome c in the IMS and 4 protons from the mitochondrial matrix. The protein is Cytochrome c oxidase subunit 2 (COII) of Rhipicephalus sanguineus (Brown dog tick).